Reading from the N-terminus, the 370-residue chain is Queuine tRNA-ribosyltransferase (370 aa).

Asp89 acts as the Proton acceptor in catalysis. Substrate-binding positions include 89–93, Asp143, Gln185, and Gly212; that span reads DSGGF. Residues 243–249 are RNA binding; the sequence is GVGKPED. Asp262 serves as the catalytic Nucleophile. Residues 267–271 form an RNA binding; important for wobble base 34 recognition region; sequence TRNAR. Zn(2+) is bound by residues Cys300, Cys302, Cys305, and His331.

This sequence belongs to the queuine tRNA-ribosyltransferase family. As to quaternary structure, homodimer. Within each dimer, one monomer is responsible for RNA recognition and catalysis, while the other monomer binds to the replacement base PreQ1. Zn(2+) serves as cofactor.

It catalyses the reaction 7-aminomethyl-7-carbaguanine + guanosine(34) in tRNA = 7-aminomethyl-7-carbaguanosine(34) in tRNA + guanine. It participates in tRNA modification; tRNA-queuosine biosynthesis. Catalyzes the base-exchange of a guanine (G) residue with the queuine precursor 7-aminomethyl-7-deazaguanine (PreQ1) at position 34 (anticodon wobble position) in tRNAs with GU(N) anticodons (tRNA-Asp, -Asn, -His and -Tyr). Catalysis occurs through a double-displacement mechanism. The nucleophile active site attacks the C1' of nucleotide 34 to detach the guanine base from the RNA, forming a covalent enzyme-RNA intermediate. The proton acceptor active site deprotonates the incoming PreQ1, allowing a nucleophilic attack on the C1' of the ribose to form the product. After dissociation, two additional enzymatic reactions on the tRNA convert PreQ1 to queuine (Q), resulting in the hypermodified nucleoside queuosine (7-(((4,5-cis-dihydroxy-2-cyclopenten-1-yl)amino)methyl)-7-deazaguanosine). This chain is Queuine tRNA-ribosyltransferase, found in Hydrogenovibrio crunogenus (strain DSM 25203 / XCL-2) (Thiomicrospira crunogena).